An 844-amino-acid chain; its full sequence is Translation initiation factor IF-2 (844 aa).

Basic and acidic residues predominate over residues 1–11; that stretch reads MTEDVKADAPK. Disordered stretches follow at residues 1–48 and 79–249; these read MTED…VKTD and RLEA…GTAL. The span at 21–30 shows a compositional bias: low complexity; the sequence is TTVSSTTTGG. Basic and acidic residues predominate over residues 79-161; the sequence is RLEAEKAATK…AAEEAKRYAE (83 aa). Acidic residues predominate over residues 162–175; the sequence is ADDSDNESSSEDYS. Positions 200 to 210 are enriched in basic residues; sequence RGKNKVAKAKK. A compositionally biased stretch (basic and acidic residues) spans 211 to 237; sequence GGRDDENSKNSKNERESNRKNQKDAKF. The tr-type G domain occupies 343 to 513; that stretch reads TRAPVVTIMG…LLQSEVLELT (171 aa). The segment at 352–359 is G1; it reads GHVDHGKT. Position 352–359 (352–359) interacts with GTP; it reads GHVDHGKT. The G2 stretch occupies residues 377 to 381; that stretch reads GITQH. Positions 399–402 are G3; that stretch reads DTPG. Residues 399-403 and 453-456 each bind GTP; these read DTPGH and NKID. A G4 region spans residues 453–456; it reads NKID. The G5 stretch occupies residues 489-491; that stretch reads SAK.

This sequence belongs to the TRAFAC class translation factor GTPase superfamily. Classic translation factor GTPase family. IF-2 subfamily.

It localises to the cytoplasm. One of the essential components for the initiation of protein synthesis. Protects formylmethionyl-tRNA from spontaneous hydrolysis and promotes its binding to the 30S ribosomal subunits. Also involved in the hydrolysis of GTP during the formation of the 70S ribosomal complex. This is Translation initiation factor IF-2 from Haemophilus influenzae (strain 86-028NP).